We begin with the raw amino-acid sequence, 176 residues long: RNA pyrophosphohydrolase (176 aa).

The 144-residue stretch at 6 to 149 folds into the Nudix hydrolase domain; sequence GYRPNVGIIL…KRQVYQQALF (144 aa). The Nudix box motif lies at 38–59; it reads GGIKHGESPEQAMFRELFEEVG.

Belongs to the Nudix hydrolase family. RppH subfamily. It depends on a divalent metal cation as a cofactor.

Its function is as follows. Accelerates the degradation of transcripts by removing pyrophosphate from the 5'-end of triphosphorylated RNA, leading to a more labile monophosphorylated state that can stimulate subsequent ribonuclease cleavage. The polypeptide is RNA pyrophosphohydrolase (Aromatoleum aromaticum (strain DSM 19018 / LMG 30748 / EbN1) (Azoarcus sp. (strain EbN1))).